The chain runs to 394 residues: Exodeoxyribonuclease 7 large subunit (394 aa).

Belongs to the XseA family. Heterooligomer composed of large and small subunits.

The protein localises to the cytoplasm. The enzyme catalyses Exonucleolytic cleavage in either 5'- to 3'- or 3'- to 5'-direction to yield nucleoside 5'-phosphates.. Bidirectionally degrades single-stranded DNA into large acid-insoluble oligonucleotides, which are then degraded further into small acid-soluble oligonucleotides. The sequence is that of Exodeoxyribonuclease 7 large subunit from Thermotoga petrophila (strain ATCC BAA-488 / DSM 13995 / JCM 10881 / RKU-1).